The primary structure comprises 186 residues: uncharacterized protein (186 aa).

This is an uncharacterized protein from Trypanosoma brucei brucei.